A 441-amino-acid polypeptide reads, in one-letter code: Probable carboxypeptidase NFIA_052450 (441 aa).

An N-terminal signal peptide occupies residues 1-16; sequence MKPLSSLLLSAALSAA. N-linked (GlcNAc...) asparagine glycosylation is found at Asn88 and Asn150. Asp166 is a Zn(2+) binding site. Glu198 functions as the Proton acceptor in the catalytic mechanism. Glu199 is a Zn(2+) binding site. 2 N-linked (GlcNAc...) asparagine glycosylation sites follow: Asn354 and Asn373.

The protein belongs to the peptidase M20A family. The cofactor is Zn(2+).

It is found in the secreted. This chain is Probable carboxypeptidase NFIA_052450, found in Neosartorya fischeri (strain ATCC 1020 / DSM 3700 / CBS 544.65 / FGSC A1164 / JCM 1740 / NRRL 181 / WB 181) (Aspergillus fischerianus).